Here is an 805-residue protein sequence, read N- to C-terminus: Phenylalanine--tRNA ligase beta subunit (805 aa).

The region spanning 39–155 (VKVLGAFRIC…EDAPMGMRFI (117 aa)) is the tRNA-binding domain. Positions 408 to 479 (DTSRAYRFDP…RVASLTKLQG (72 aa)) constitute a B5 domain. Asp-457, Asp-463, Glu-466, and Glu-467 together coordinate Mg(2+). The region spanning 707–804 (SDLQAVERDF…VAKATGATLR (98 aa)) is the FDX-ACB domain.

Belongs to the phenylalanyl-tRNA synthetase beta subunit family. Type 1 subfamily. As to quaternary structure, tetramer of two alpha and two beta subunits. Mg(2+) is required as a cofactor.

It is found in the cytoplasm. The enzyme catalyses tRNA(Phe) + L-phenylalanine + ATP = L-phenylalanyl-tRNA(Phe) + AMP + diphosphate + H(+). This chain is Phenylalanine--tRNA ligase beta subunit, found in Cereibacter sphaeroides (strain ATCC 17023 / DSM 158 / JCM 6121 / CCUG 31486 / LMG 2827 / NBRC 12203 / NCIMB 8253 / ATH 2.4.1.) (Rhodobacter sphaeroides).